The chain runs to 1997 residues: Autophagy-related protein 2 homolog A (1997 aa).

Positions 17 to 119 constitute a Chorein N-terminal domain; it reads CRYLLQHYLG…RGAAQGTESQ (103 aa). Disordered stretches follow at residues 241-281, 1292-1323, 1371-1414, 1492-1534, and 1684-1718; these read TSVQ…IQQI, HCPP…CLPA, EEIK…TDTD, SSRP…TQGG, and RLDG…SSTD. The span at 1311-1321 shows a compositional bias: pro residues; that stretch reads PEGPSSLPPCL. Polar residues-rich tracts occupy residues 1393–1408, 1493–1532, and 1690–1718; these read RVSQ…SGDS, SRPN…WRTQ, and KSSS…SSTD.

It belongs to the ATG2 family.

Its subcellular location is the preautophagosomal structure membrane. It is found in the lipid droplet. It localises to the endoplasmic reticulum membrane. The catalysed reaction is a 1,2-diacyl-sn-glycero-3-phospho-L-serine(in) = a 1,2-diacyl-sn-glycero-3-phospho-L-serine(out). The enzyme catalyses a 1,2-diacyl-sn-glycero-3-phosphoethanolamine(in) = a 1,2-diacyl-sn-glycero-3-phosphoethanolamine(out). In terms of biological role, lipid transfer protein involved in autophagosome assembly. Tethers the edge of the isolation membrane (IM) to the endoplasmic reticulum (ER) and mediates direct lipid transfer from ER to IM for IM expansion. Binds to the ER exit site (ERES), which is the membrane source for autophagosome formation, and extracts phospholipids from the membrane source and transfers them to atg9 (atg9a or atg9b) to the IM for membrane expansion. Also regulates lipid droplets morphology and distribution within the cell. The chain is Autophagy-related protein 2 homolog A from Xenopus tropicalis (Western clawed frog).